The primary structure comprises 481 residues: Aspartyl/glutamyl-tRNA(Asn/Gln) amidotransferase subunit B (481 aa).

The protein belongs to the GatB/GatE family. GatB subfamily. As to quaternary structure, heterotrimer of A, B and C subunits.

The catalysed reaction is L-glutamyl-tRNA(Gln) + L-glutamine + ATP + H2O = L-glutaminyl-tRNA(Gln) + L-glutamate + ADP + phosphate + H(+). It carries out the reaction L-aspartyl-tRNA(Asn) + L-glutamine + ATP + H2O = L-asparaginyl-tRNA(Asn) + L-glutamate + ADP + phosphate + 2 H(+). Functionally, allows the formation of correctly charged Asn-tRNA(Asn) or Gln-tRNA(Gln) through the transamidation of misacylated Asp-tRNA(Asn) or Glu-tRNA(Gln) in organisms which lack either or both of asparaginyl-tRNA or glutaminyl-tRNA synthetases. The reaction takes place in the presence of glutamine and ATP through an activated phospho-Asp-tRNA(Asn) or phospho-Glu-tRNA(Gln). The polypeptide is Aspartyl/glutamyl-tRNA(Asn/Gln) amidotransferase subunit B (Carboxydothermus hydrogenoformans (strain ATCC BAA-161 / DSM 6008 / Z-2901)).